Reading from the N-terminus, the 517-residue chain is MQLNPAEISELIKSRIEGLTVSADIRNQGTVVSVTDGIVRIHGLSDVMQGEMLEFPATADGTPTYGLALNLERDSVGSVILGEYEHIAEGDTVKCTGRILEVPVGPELLGRVVNALGQPIDGKGPINAKMTDVIEKVAPGVIARKSVDQPLQTGLKSIDSMVPVGRGQRELIIGDRQTGKTAVAIDAIINQKGKGVSCVYVAIGQKASSIKNVVRSLEQAGAMEYTIVVAASASESAAMQYVSAYSGCTMGEYFRDRGEDALIVYDDLSKQAVAYRQVSLLLRRPPGREAYPGDVFYLHSRLLERAARVNEKYVEDFTKGAVKGKTGSLTALPIIETQAGDVSAFVPTNVISITDGQIFLETSLFNAGIRPAINAGISVSRVGGAAQTKLIKNLSGGIRTDLAQYRELAAFAQFASDLDEATRKQLDRGARVTELLKQAQYSPLSISNMAATLFAVNKGFMDDVEVKKVLAFEHGLHAWLKDKNAALMAKLEANKAMDKDAEAELNTAVAAFKKAFA.

An ATP-binding site is contributed by 174–181 (GDRQTGKT).

The protein belongs to the ATPase alpha/beta chains family. As to quaternary structure, F-type ATPases have 2 components, CF(1) - the catalytic core - and CF(0) - the membrane proton channel. CF(1) has five subunits: alpha(3), beta(3), gamma(1), delta(1), epsilon(1). CF(0) has three main subunits: a(1), b(2) and c(9-12). The alpha and beta chains form an alternating ring which encloses part of the gamma chain. CF(1) is attached to CF(0) by a central stalk formed by the gamma and epsilon chains, while a peripheral stalk is formed by the delta and b chains.

It is found in the cell inner membrane. It carries out the reaction ATP + H2O + 4 H(+)(in) = ADP + phosphate + 5 H(+)(out). Produces ATP from ADP in the presence of a proton gradient across the membrane. The alpha chain is a regulatory subunit. The protein is ATP synthase subunit alpha of Polaromonas sp. (strain JS666 / ATCC BAA-500).